The chain runs to 322 residues: Polyisoprenyl-teichoic acid--peptidoglycan teichoic acid transferase TagT (322 aa).

Residues 1–19 (MEERSQRRKKKRKLKKWVK) lie on the Cytoplasmic side of the membrane. A helical; Signal-anchor for type II membrane protein transmembrane segment spans residues 20–40 (VVAGLMAFLVIAAGSVGAYAF). Residues 41–322 (VKLNNASKEA…KKELQNDLGV (282 aa)) lie on the Extracellular side of the membrane.

The protein belongs to the LytR/CpsA/Psr (LCP) family. Interacts with MreB.

It localises to the cell membrane. It participates in cell wall biogenesis. Functionally, may catalyze the final step in cell wall teichoic acid biosynthesis, the transfer of the anionic cell wall polymers (APs) from their lipid-linked precursor to the cell wall peptidoglycan (PG). The polypeptide is Polyisoprenyl-teichoic acid--peptidoglycan teichoic acid transferase TagT (Bacillus subtilis (strain 168)).